Reading from the N-terminus, the 267-residue chain is Ras-related protein Rab-36 (267 aa).

GTP-binding residues include Val68, Gly69, Lys70, Thr71, Ser72, Asp83, Tyr86, and Thr89. Mg(2+) is bound at residue Thr71. A Switch 1 motif is present at residues 76-94; it reads RLCKNVFDHDYKATIGVDF. Residues Thr89 and Asp112 each contribute to the Mg(2+) site. The Switch 2 signature appears at 113–132; the sequence is TAGQEKFKCIASAYYRGAQV. GTP is bound by residues Gly115, Lys172, Asp174, Ser203, Ala204, and Lys205. S-geranylgeranyl cysteine attachment occurs at residues Cys266 and Cys267.

Belongs to the small GTPase superfamily. Rab family. Mg(2+) is required as a cofactor.

It is found in the golgi apparatus membrane. It catalyses the reaction GTP + H2O = GDP + phosphate + H(+). Regulated by guanine nucleotide exchange factors (GEFs) which promote the exchange of bound GDP for free GTP. Regulated by GTPase activating proteins (GAPs) which increase the GTP hydrolysis activity. Inhibited by GDP dissociation inhibitors (GDIs). Its function is as follows. The small GTPases Rab are key regulators of intracellular membrane trafficking, from the formation of transport vesicles to their fusion with membranes. Rabs cycle between an inactive GDP-bound form and an active GTP-bound form that is able to recruit to membranes different sets of downstream effectors directly responsible for vesicle formation, movement, tethering and fusion. This is Ras-related protein Rab-36 from Mus musculus (Mouse).